The following is a 156-amino-acid chain: WASQVSENRPVCKAIIQGKQFEGLVDTGADVSIIALNQWPKNWPKQKAVTGLVGVGTASEVYQSTEILHCLGPDNQESTVQPMITSIPLNLWGRDLLQQWGAEITMPAPLYSPTSQKIMTKMGYIPGKGLGKNEDGIKIPVEAKINQKREGIGYPF.

A Peptidase A2 domain is found at 21 to 96; it reads FEGLVDTGAD…IPLNLWGRDL (76 aa). Asp26 is a catalytic residue. The G-patch domain occupies 111 to 156; sequence YSPTSQKIMTKMGYIPGKGLGKNEDGIKIPVEAKINQKREGIGYPF.

The protein belongs to the peptidase A2 family. HERV class-II K(HML-2) subfamily. Active as a homodimer. Post-translationally, autoproteolytically processed at the N-terminus. Expected C-terminal autoprocessing not detected. The sequence shown is that of the processed Pro protein.

It carries out the reaction Processing at the authentic HIV-1 PR recognition site and release of the mature p17 matrix and the p24 capsid protein, as a result of the cleavage of the -SQNY-|-PIVQ- cleavage site.. In terms of biological role, retroviral proteases have roles in processing of the primary translation products and the maturation of the viral particle. Endogenous Pro proteins may have kept, lost or modified their original function during evolution. This endogenous protein has retained most of the characteristics of retroviral proteases. This chain is Endogenous retrovirus group K member 25 Pro protein (ERVK-25), found in Homo sapiens (Human).